Consider the following 173-residue polypeptide: Co-chaperone protein HscB homolog (173 aa).

Residues 5–77 (CHFAQFDLQP…PRRALYLLTL (73 aa)) enclose the J domain.

The protein belongs to the HscB family. Interacts with HscA and stimulates its ATPase activity.

Co-chaperone involved in the maturation of iron-sulfur cluster-containing proteins. Seems to help targeting proteins to be folded toward HscA. In Pseudomonas paraeruginosa (strain DSM 24068 / PA7) (Pseudomonas aeruginosa (strain PA7)), this protein is Co-chaperone protein HscB homolog.